A 71-amino-acid chain; its full sequence is Large ribosomal subunit protein bL31 (71 aa).

Zn(2+) is bound by residues cysteine 16, cysteine 18, cysteine 37, and cysteine 40.

Belongs to the bacterial ribosomal protein bL31 family. Type A subfamily. As to quaternary structure, part of the 50S ribosomal subunit. The cofactor is Zn(2+).

Its function is as follows. Binds the 23S rRNA. This chain is Large ribosomal subunit protein bL31, found in Marinomonas sp. (strain MWYL1).